A 210-amino-acid chain; its full sequence is MVDCIVKNWQGEEVGNASLTLRVAKEENAAHIVHRALVRQQNNARQGNASAKTRAEVRGGGRKPWKQKGTGRARAGSIRSPLWRGGGVIFGPKPRDYSQKMNRKERRLALRTAIASRADNMVVVEAFGDQFSQPKTKELATALTRWGAKPEKRVLLILDEIPENVFLSGRNIPYLKILRADNLNIYDVLVADTIVATATALEKIQEVYGE.

Residues 41–51 (QNNARQGNASA) show a composition bias toward polar residues. Residues 41–77 (QNNARQGNASAKTRAEVRGGGRKPWKQKGTGRARAGS) form a disordered region. The segment covering 60-71 (GGRKPWKQKGTG) has biased composition (basic residues).

This sequence belongs to the universal ribosomal protein uL4 family. Part of the 50S ribosomal subunit.

Functionally, one of the primary rRNA binding proteins, this protein initially binds near the 5'-end of the 23S rRNA. It is important during the early stages of 50S assembly. It makes multiple contacts with different domains of the 23S rRNA in the assembled 50S subunit and ribosome. In terms of biological role, forms part of the polypeptide exit tunnel. The protein is Large ribosomal subunit protein uL4 of Synechocystis sp. (strain ATCC 27184 / PCC 6803 / Kazusa).